The following is a 193-amino-acid chain: MNDRLTPELVLSAYCQGCFPMADPETGEISFYEPDPRALIPLDDRFHIPHGLKRALNKKPFELRMDTAFPEVVHACARTDQPEEQWIDGQIEEAYGKLHEMGFAHSVECWDEEGLQGGLYGVALGKAFFGESMFHRKTDASKIALVALVQYLRAHRFLFLDTQWTTPHLLKFGTYEVPAKEYRKLLKRALEEQ.

The protein belongs to the L/F-transferase family.

The protein resides in the cytoplasm. It carries out the reaction N-terminal L-lysyl-[protein] + L-leucyl-tRNA(Leu) = N-terminal L-leucyl-L-lysyl-[protein] + tRNA(Leu) + H(+). The enzyme catalyses N-terminal L-arginyl-[protein] + L-leucyl-tRNA(Leu) = N-terminal L-leucyl-L-arginyl-[protein] + tRNA(Leu) + H(+). The catalysed reaction is L-phenylalanyl-tRNA(Phe) + an N-terminal L-alpha-aminoacyl-[protein] = an N-terminal L-phenylalanyl-L-alpha-aminoacyl-[protein] + tRNA(Phe). In terms of biological role, functions in the N-end rule pathway of protein degradation where it conjugates Leu, Phe and, less efficiently, Met from aminoacyl-tRNAs to the N-termini of proteins containing an N-terminal arginine or lysine. The protein is Leucyl/phenylalanyl-tRNA--protein transferase of Akkermansia muciniphila (strain ATCC BAA-835 / DSM 22959 / JCM 33894 / BCRC 81048 / CCUG 64013 / CIP 107961 / Muc).